The primary structure comprises 459 residues: Sulfite oxidase (459 aa).

The Cytochrome b5 heme-binding domain occupies 4 to 83; that stretch reads YPRYTREEVG…LQQYKVGELS (80 aa). Heme b is bound by residues His40, His65, and His69. The tract at residues 83 to 115 is disordered; it reads SPDEAPAAPDAQDPFAGDPPRHPGLRVNSQKPF. Residues 85–100 are compositionally biased toward low complexity; sequence DEAPAAPDAQDPFAGD. The segment at 86 to 95 is hinge; it reads EAPAAPDAQD. The tract at residues 96 to 323 is moco domain; that stretch reads PFAGDPPRHP…PSRWQQNDYK (228 aa). Mo-molybdopterin-binding positions include 136-140, Cys185, Asp244, His283, Arg288, and 299-301; these read FTRNH and SVK. A homodimerization region spans residues 324–459; it reads GFSPCVDWDT…RGVLSTAWHR (136 aa).

In terms of assembly, homodimer. The cofactor is heme b. It depends on Mo-molybdopterin as a cofactor.

The protein localises to the mitochondrion intermembrane space. The catalysed reaction is sulfite + O2 + H2O = sulfate + H2O2. It participates in energy metabolism; sulfur metabolism. In terms of biological role, catalyzes the oxidation of sulfite to sulfate, the terminal reaction in the oxidative degradation of sulfur-containing amino acids. The protein is Sulfite oxidase (SUOX) of Gallus gallus (Chicken).